The sequence spans 408 residues: Peptidase T (408 aa).

Residue His-78 participates in Zn(2+) binding. Asp-80 is an active-site residue. Asp-141 is a Zn(2+) binding site. The Proton acceptor role is filled by Glu-175. Zn(2+)-binding residues include Glu-176, Asp-198, and His-380.

Belongs to the peptidase M20B family. Zn(2+) is required as a cofactor.

It localises to the cytoplasm. It carries out the reaction Release of the N-terminal residue from a tripeptide.. Its function is as follows. Cleaves the N-terminal amino acid of tripeptides. In Clostridium botulinum (strain Langeland / NCTC 10281 / Type F), this protein is Peptidase T.